The primary structure comprises 304 residues: Pyridoxal 5'-phosphate synthase subunit pyroA (304 aa).

Asp28 contributes to the D-ribose 5-phosphate binding site. The active-site Schiff-base intermediate with D-ribose 5-phosphate is Lys85. A D-ribose 5-phosphate-binding site is contributed by Gly157. Residue Arg169 participates in D-glyceraldehyde 3-phosphate binding. D-ribose 5-phosphate-binding positions include Gly224 and Gly245 to Ser246.

It belongs to the PdxS/SNZ family.

It catalyses the reaction aldehydo-D-ribose 5-phosphate + D-glyceraldehyde 3-phosphate + L-glutamine = pyridoxal 5'-phosphate + L-glutamate + phosphate + 3 H2O + H(+). It functions in the pathway cofactor biosynthesis; pyridoxal 5'-phosphate biosynthesis. Functionally, catalyzes the formation of pyridoxal 5'-phosphate from ribose 5-phosphate (RBP), glyceraldehyde 3-phosphate (G3P) and ammonia. The ammonia is provided by PDX2. Can also use ribulose 5-phosphate and dihydroxyacetone phosphate as substrates, resulting from enzyme-catalyzed isomerization of RBP and G3P, respectively. Also plays an indirect role in resistance to singlet oxygen-generating photosensitizers. In Emericella nidulans (strain FGSC A4 / ATCC 38163 / CBS 112.46 / NRRL 194 / M139) (Aspergillus nidulans), this protein is Pyridoxal 5'-phosphate synthase subunit pyroA (pyroA).